We begin with the raw amino-acid sequence, 273 residues long: MKKTQTWIITCIYLQLLLFNPLVKTKEICGNPVTDNVKDITKLVANLPNDYMITLNYVAGMDVLPSHCWLRDMVIQLSLSLTTLLDKFSNISEGLSNYSIIDKLGKIVDDLVLCMEENAPKNIKESPKRPETRSFTPEEFFSIFNRSIDAFKDFMVASDTSDCVLSSTLGPEKDSRVSVTKPFMLPPVAASSLRNDSSSSNRKAAKAPEDSGLQWTAMALPALISLVIGFAFGALYWKKKQSSLTRAVENIQINEEDNEISMLQQKEREFQEV.

The first 25 residues, 1 to 25, serve as a signal peptide directing secretion; it reads MKKTQTWIITCIYLQLLLFNPLVKT. Over 26-214 the chain is Extracellular; sequence KEICGNPVTD…AKAPEDSGLQ (189 aa). Cystine bridges form between C29–C114 and C68–C163. N90, N97, N145, and N195 each carry an N-linked (GlcNAc...) asparagine glycan. Residues 190–210 are disordered; sequence ASSLRNDSSSSNRKAAKAPED. Residues 191 to 202 are compositionally biased toward low complexity; that stretch reads SSLRNDSSSSNR. Residues 215 to 237 traverse the membrane as a helical segment; sequence WTAMALPALISLVIGFAFGALYW. At 238 to 273 the chain is on the cytoplasmic side; the sequence is KKKQSSLTRAVENIQINEEDNEISMLQQKEREFQEV.

The protein belongs to the SCF family. As to quaternary structure, homodimer, non-covalently linked. Heterotetramer with KIT, binding two KIT molecules; thereby mediates KIT dimerization and subsequent activation by autophosphorylation. Post-translationally, a soluble form is produced by proteolytic processing of isoform 1 in the extracellular domain. Expressed in the cochlea.

Its subcellular location is the cell membrane. The protein resides in the cytoplasm. It is found in the cytoskeleton. It localises to the cell projection. The protein localises to the lamellipodium. Its subcellular location is the filopodium. The protein resides in the secreted. Its function is as follows. Ligand for the receptor-type protein-tyrosine kinase KIT. Plays an essential role in the regulation of cell survival and proliferation, hematopoiesis, stem cell maintenance, gametogenesis, mast cell development, migration and function, and in melanogenesis. KITLG/SCF binding can activate several signaling pathways. Promotes phosphorylation of PIK3R1, the regulatory subunit of phosphatidylinositol 3-kinase, and subsequent activation of the kinase AKT1. KITLG/SCF and KIT also transmit signals via GRB2 and activation of RAS, RAF1 and the MAP kinases MAPK1/ERK2 and/or MAPK3/ERK1. KITLG/SCF and KIT promote activation of STAT family members STAT1, STAT3 and STAT5. KITLG/SCF and KIT promote activation of PLCG1, leading to the production of the cellular signaling molecules diacylglycerol and inositol 1,4,5-trisphosphate. KITLG/SCF acts synergistically with other cytokines, probably interleukins. This Mus musculus (Mouse) protein is Kit ligand (Kitlg).